The sequence spans 331 residues: Ribosomal RNA small subunit methyltransferase H (331 aa).

Residues 38-40 (GGY), Asp56, Phe83, Asp100, and Gln107 each bind S-adenosyl-L-methionine. The disordered stretch occupies residues 308–331 (TDAPAGPVDPQVLGMPLIPKKGRR).

This sequence belongs to the methyltransferase superfamily. RsmH family.

Its subcellular location is the cytoplasm. It catalyses the reaction cytidine(1402) in 16S rRNA + S-adenosyl-L-methionine = N(4)-methylcytidine(1402) in 16S rRNA + S-adenosyl-L-homocysteine + H(+). In terms of biological role, specifically methylates the N4 position of cytidine in position 1402 (C1402) of 16S rRNA. In Cereibacter sphaeroides (strain ATCC 17025 / ATH 2.4.3) (Rhodobacter sphaeroides), this protein is Ribosomal RNA small subunit methyltransferase H.